Consider the following 508-residue polypeptide: Endoglucanase 6 (508 aa).

The signal sequence occupies residues 1-33 (MLAASLRVEAVAVVAAAVLVLLLSPAAVVVVAG). Catalysis depends on aspartate 89, which acts as the Nucleophile. Catalysis depends on residues histidine 419, aspartate 471, and glutamate 480.

The protein belongs to the glycosyl hydrolase 9 (cellulase E) family.

The protein resides in the secreted. The enzyme catalyses Endohydrolysis of (1-&gt;4)-beta-D-glucosidic linkages in cellulose, lichenin and cereal beta-D-glucans.. The sequence is that of Endoglucanase 6 from Oryza sativa subsp. japonica (Rice).